A 416-amino-acid polypeptide reads, in one-letter code: MISVVVGMQFGDEGKGKITDYLCSNYDDVVRFNGGNNAGHTVVIDGKKIKFHLIPSGAMQAGTVVLGNGMVIDPLKLLDEIKQLKLAKDNIKIVISGRAGVVTELHRILDKKEEELRSNSSIGTTSQGIGPAYEDKYGRLSIKMYDLNSIKKIKDKLNQLIAMKGLLTGPVDIDRVSNELYSAGSELYEYIGDASEFLEDEYRLGKNILFEGAQGAMLDIDFGTYPFVTSSNTVAGSVSTGSGFSFRRVEDVIGVFKAYTTKVGSGIFPTEIGSDDLRIAGNEYGTTTGRPRRTGWLDLPILRYAAYLNDVNRLAITKLDILGKLNQIKVGTSYIIDGKDYERFPDKIDPESEITVNYETFETWGDISSRISGYLGSGYDALPYNMRKYIEFIEDSLNCSIDIISLGEDRKSTIVK.

GTP contacts are provided by residues 11–17 (GDEGKGK) and 39–41 (GHT). Asp-12 (proton acceptor) is an active-site residue. Mg(2+)-binding residues include Asp-12 and Gly-39. IMP is bound by residues 12-15 (DEGK), 37-40 (NAGH), Thr-125, Arg-139, Gln-214, Thr-229, and Arg-290. His-40 serves as the catalytic Proton donor. 286-292 (TTTGRPR) lines the substrate pocket. GTP contacts are provided by residues Arg-292, 318 to 320 (KLD), and 405 to 407 (SLG).

Belongs to the adenylosuccinate synthetase family. As to quaternary structure, homodimer. Mg(2+) serves as cofactor.

It is found in the cytoplasm. The enzyme catalyses IMP + L-aspartate + GTP = N(6)-(1,2-dicarboxyethyl)-AMP + GDP + phosphate + 2 H(+). It functions in the pathway purine metabolism; AMP biosynthesis via de novo pathway; AMP from IMP: step 1/2. In terms of biological role, plays an important role in the de novo pathway of purine nucleotide biosynthesis. Catalyzes the first committed step in the biosynthesis of AMP from IMP. The chain is Adenylosuccinate synthetase from Picrophilus torridus (strain ATCC 700027 / DSM 9790 / JCM 10055 / NBRC 100828 / KAW 2/3).